Here is a 217-residue protein sequence, read N- to C-terminus: 3,4-dihydroxy-2-butanone 4-phosphate synthase (217 aa).

D-ribulose 5-phosphate-binding positions include R37–E38, D42, R150–T154, and E174. Position 38 (E38) interacts with Mg(2+). H153 provides a ligand contact to Mg(2+).

It belongs to the DHBP synthase family. As to quaternary structure, homodimer. It depends on Mg(2+) as a cofactor. Requires Mn(2+) as cofactor.

It carries out the reaction D-ribulose 5-phosphate = (2S)-2-hydroxy-3-oxobutyl phosphate + formate + H(+). It functions in the pathway cofactor biosynthesis; riboflavin biosynthesis; 2-hydroxy-3-oxobutyl phosphate from D-ribulose 5-phosphate: step 1/1. Its function is as follows. Catalyzes the conversion of D-ribulose 5-phosphate to formate and 3,4-dihydroxy-2-butanone 4-phosphate. The protein is 3,4-dihydroxy-2-butanone 4-phosphate synthase of Klebsiella pneumoniae (strain 342).